The following is a 317-amino-acid chain: R-spondin-3 (317 aa).

Residues 1–20 (MQLQLISIVLILHFMEYTNC) form the signal peptide. 3 FU repeats span residues 34 to 86 (SGVS…GFYG), 92 to 135 (RNDC…GLVP), and 139 to 183 (KKEC…EFEP). Disulfide bonds link Cys-41-Cys-48, Cys-45-Cys-54, Cys-57-Cys-76, Cys-80-Cys-95, Cys-98-Cys-105, Cys-102-Cys-111, Cys-114-Cys-125, Cys-129-Cys-189, Cys-195-Cys-237, Cys-206-Cys-213, and Cys-246-Cys-253. Residue Asn-184 is glycosylated (N-linked (GlcNAc...) asparagine). One can recognise a TSP type-1 domain in the interval 194–254 (HCEVSEWSEW…ECFVKKKRCK (61 aa)). Positions 251 to 268 (KRCKPPKGQRRGEKKKRF) are enriched in basic residues. The disordered stretch occupies residues 251-317 (KRCKPPKGQR…RDQSRDAGTV (67 aa)). The span at 274-303 (VTAEARRERKREREKETIDREESENRNKTE) shows a compositional bias: basic and acidic residues. The N-linked (GlcNAc...) asparagine glycan is linked to Asn-300.

Belongs to the R-spondin family. In terms of assembly, binds heparin.

The protein localises to the secreted. Its function is as follows. Activator of the canonical Wnt signaling pathway by acting as a ligand for lgr4-6 receptors, which acts as a key regulator of angiogenesis. Upon binding to lgr4-6 (lgr4, lgr5 or lgr6), lgr4-6 associate with phosphorylated lrp6 and frizzled receptors that are activated by extracellular Wnt receptors, triggering the canonical Wnt signaling pathway to increase expression of target genes. Acts both in the canonical. Wnt/beta-catenin-dependent pathway and in non-canonical Wnt signaling pathway. Acts as a key regulator of angiogenesis by controlling vascular stability and pruning: acts by activating the non-canonical Wnt signaling pathway in endothelial cells. Can also amplify Wnt signaling pathway independently of LGR4-6 receptors, possibly by acting as a direct antagonistic ligand to RNF43 and ZNRF3. The sequence is that of R-spondin-3 (rspo3) from Danio rerio (Zebrafish).